Here is a 359-residue protein sequence, read N- to C-terminus: Guanine nucleotide-binding protein subunit alpha-11 (359 aa).

S-palmitoyl cysteine attachment occurs at residues C9 and C10. One can recognise a G-alpha domain in the interval 38 to 359 (RELKLLLLGT…QLNLKEYNLV (322 aa)). The segment at 41–54 (KLLLLGTGESGKST) is G1 motif. GTP contacts are provided by residues 46–53 (GTGESGKS) and 180–183 (LRVR). S53 serves as a coordination point for Mg(2+). The interval 178–186 (DVLRVRVPT) is G2 motif. T186 contributes to the Mg(2+) binding site. The tract at residues 201–210 (FRMVDVGGQR) is G3 motif. The G4 motif stretch occupies residues 270–277 (ILFLNKKD). Residues 274–277 (NKKD) and A331 each bind GTP. The interval 329 to 334 (TCATDT) is G5 motif.

Belongs to the G-alpha family. G(q) subfamily. In terms of assembly, g proteins are composed of 3 units; alpha, beta and gamma. The alpha chain contains the guanine nucleotide binding site. Interacts with RGS22. Interacts with NTSR1.

The protein localises to the cell membrane. It localises to the cytoplasm. The catalysed reaction is GTP + H2O = GDP + phosphate + H(+). Guanine nucleotide-binding proteins (G proteins) function as transducers downstream of G protein-coupled receptors (GPCRs) in numerous signaling cascades. The alpha chain contains the guanine nucleotide binding site and alternates between an active, GTP-bound state and an inactive, GDP-bound state. Signaling by an activated GPCR promotes GDP release and GTP binding. The alpha subunit has a low GTPase activity that converts bound GTP to GDP, thereby terminating the signal. Both GDP release and GTP hydrolysis are modulated by numerous regulatory proteins. Signaling is mediated via phospholipase C-beta-dependent inositol lipid hydrolysis for signal propagation: activates phospholipase C-beta: following GPCR activation, GNA11 activates PLC-beta (PLCB1, PLCB2, PLCB3 or PLCB4), leading to production of diacylglycerol (DAG) and inositol 1,4,5-trisphosphate (IP3). Transduces FFAR4 signaling in response to long-chain fatty acids (LCFAs). Together with GNAQ, required for heart development. In the respiratory epithelium, transmits OXGR1-dependent signals that lead to downstream intracellular Ca(2+) release and mucocilliary clearance of airborne pathogens. The polypeptide is Guanine nucleotide-binding protein subunit alpha-11 (GNA11) (Sus scrofa (Pig)).